Reading from the N-terminus, the 444-residue chain is Tol-Pal system protein TolB (444 aa).

The first 19 residues, 1–19, serve as a signal peptide directing secretion; the sequence is MRNIIYFILLLLFSFKGYA.

This sequence belongs to the TolB family. In terms of assembly, the Tol-Pal system is composed of five core proteins: the inner membrane proteins TolA, TolQ and TolR, the periplasmic protein TolB and the outer membrane protein Pal. They form a network linking the inner and outer membranes and the peptidoglycan layer.

Its subcellular location is the periplasm. In terms of biological role, part of the Tol-Pal system, which plays a role in outer membrane invagination during cell division and is important for maintaining outer membrane integrity. In Rickettsia akari (strain Hartford), this protein is Tol-Pal system protein TolB.